Consider the following 355-residue polypeptide: Tetraacyldisaccharide 4'-kinase (355 aa).

64-71 contacts ATP; sequence YVGGTGKT. Positions 206-226 are disordered; that stretch reads NRAPQSSATPTAASGQGPRRA. The segment covering 208–222 has biased composition (low complexity); sequence APQSSATPTAASGQG.

Belongs to the LpxK family.

It catalyses the reaction a lipid A disaccharide + ATP = a lipid IVA + ADP + H(+). It participates in glycolipid biosynthesis; lipid IV(A) biosynthesis; lipid IV(A) from (3R)-3-hydroxytetradecanoyl-[acyl-carrier-protein] and UDP-N-acetyl-alpha-D-glucosamine: step 6/6. Transfers the gamma-phosphate of ATP to the 4'-position of a tetraacyldisaccharide 1-phosphate intermediate (termed DS-1-P) to form tetraacyldisaccharide 1,4'-bis-phosphate (lipid IVA). The sequence is that of Tetraacyldisaccharide 4'-kinase from Bordetella petrii (strain ATCC BAA-461 / DSM 12804 / CCUG 43448).